The chain runs to 158 residues: SsrA-binding protein (158 aa).

It belongs to the SmpB family.

It localises to the cytoplasm. Functionally, required for rescue of stalled ribosomes mediated by trans-translation. Binds to transfer-messenger RNA (tmRNA), required for stable association of tmRNA with ribosomes. tmRNA and SmpB together mimic tRNA shape, replacing the anticodon stem-loop with SmpB. tmRNA is encoded by the ssrA gene; the 2 termini fold to resemble tRNA(Ala) and it encodes a 'tag peptide', a short internal open reading frame. During trans-translation Ala-aminoacylated tmRNA acts like a tRNA, entering the A-site of stalled ribosomes, displacing the stalled mRNA. The ribosome then switches to translate the ORF on the tmRNA; the nascent peptide is terminated with the 'tag peptide' encoded by the tmRNA and targeted for degradation. The ribosome is freed to recommence translation, which seems to be the essential function of trans-translation. The sequence is that of SsrA-binding protein from Parafrankia sp. (strain EAN1pec).